Reading from the N-terminus, the 395-residue chain is Argininosuccinate synthase (395 aa).

Residues 6 to 14 (AYSGGLDTS) and A33 each bind ATP. Y84 lines the L-citrulline pocket. G114 is a binding site for ATP. 3 residues coordinate L-aspartate: T116, N120, and D121. N120 contributes to the L-citrulline binding site. Residues R124, S173, S182, E258, and Y270 each coordinate L-citrulline.

Belongs to the argininosuccinate synthase family. Type 1 subfamily. Homotetramer.

The protein resides in the cytoplasm. The catalysed reaction is L-citrulline + L-aspartate + ATP = 2-(N(omega)-L-arginino)succinate + AMP + diphosphate + H(+). It functions in the pathway amino-acid biosynthesis; L-arginine biosynthesis; L-arginine from L-ornithine and carbamoyl phosphate: step 2/3. This Rhodococcoides fascians (Rhodococcus fascians) protein is Argininosuccinate synthase.